A 515-amino-acid polypeptide reads, in one-letter code: Serine/threonine-protein kinase STE7 (515 aa).

The region spanning 191 to 466 (LVQLGKIGAG…IHELLHHDLI (276 aa)) is the Protein kinase domain. ATP is bound by residues 197–205 (IGAGNSGTV) and Lys-220. Asp-331 functions as the Proton acceptor in the catalytic mechanism. The residue at position 359 (Ser-359) is a Phosphoserine. Residue Thr-363 is modified to Phosphothreonine.

Belongs to the protein kinase superfamily. STE Ser/Thr protein kinase family. MAP kinase kinase subfamily.

The catalysed reaction is L-seryl-[protein] + ATP = O-phospho-L-seryl-[protein] + ADP + H(+). The enzyme catalyses L-threonyl-[protein] + ATP = O-phospho-L-threonyl-[protein] + ADP + H(+). It catalyses the reaction L-tyrosyl-[protein] + ATP = O-phospho-L-tyrosyl-[protein] + ADP + H(+). Phosphorylated at multiple sites in response to pheromone. In terms of biological role, serine/threonine protein kinase required for cell-type-specific transcription and signal transduction in yeast. It is thought that it is phosphorylated by the ste11 protein kinase and that it can phosphorylate the FUS3 and or KSS1 kinases. In Saccharomyces cerevisiae (strain ATCC 204508 / S288c) (Baker's yeast), this protein is Serine/threonine-protein kinase STE7 (STE7).